The sequence spans 836 residues: Sucrose synthase 5 (836 aa).

The GT-B glycosyltransferase stretch occupies residues 270–748 (RIFNVVIFSV…GLQRINECYT (479 aa)). The interval 805 to 836 (PPPLPPKPLVKPSASKGSKRTQPRLSFRLFGA) is disordered.

It belongs to the glycosyltransferase 1 family. Plant sucrose synthase subfamily. In terms of tissue distribution, detected in the whole plant but more precisely confined to the vasculature in cotyledons, leaves, petals, anthers and roots. Also detected in developing siliques, young immature rosette and cauline leaves.

The protein localises to the secreted. It is found in the cell wall. It catalyses the reaction an NDP-alpha-D-glucose + D-fructose = a ribonucleoside 5'-diphosphate + sucrose + H(+). Sucrose-cleaving enzyme that provides UDP-glucose and fructose for various metabolic pathways. Functions in callose synthesis at the site of phloem sieve elements. This is Sucrose synthase 5 (SUS5) from Arabidopsis thaliana (Mouse-ear cress).